A 253-amino-acid polypeptide reads, in one-letter code: Acidic endochitinase Q (253 aa).

Positions 1-24 are cleaved as a signal peptide; sequence MEFSGSPMALFCCVFFLFLTGSLA. The active-site Proton donor is the Glu-92. Cys-212 and Cys-244 form a disulfide bridge.

It belongs to the glycosyl hydrolase 19 family. Chitinase class I subfamily.

Its subcellular location is the secreted. The enzyme catalyses Random endo-hydrolysis of N-acetyl-beta-D-glucosaminide (1-&gt;4)-beta-linkages in chitin and chitodextrins.. Its function is as follows. Defense against chitin-containing fungal pathogens. The polypeptide is Acidic endochitinase Q (Nicotiana tabacum (Common tobacco)).